Reading from the N-terminus, the 282-residue chain is Pantothenate synthetase (282 aa).

26–33 (MGNLHEGH) contacts ATP. The Proton donor role is filled by histidine 33. Position 57 (glutamine 57) interacts with (R)-pantoate. Residue glutamine 57 participates in beta-alanine binding. ATP is bound at residue 144-147 (GQKD). Glutamine 150 contributes to the (R)-pantoate binding site. Residues leucine 173 and 181-184 (LSSR) each bind ATP.

This sequence belongs to the pantothenate synthetase family. In terms of assembly, homodimer.

It localises to the cytoplasm. The enzyme catalyses (R)-pantoate + beta-alanine + ATP = (R)-pantothenate + AMP + diphosphate + H(+). The protein operates within cofactor biosynthesis; (R)-pantothenate biosynthesis; (R)-pantothenate from (R)-pantoate and beta-alanine: step 1/1. Its function is as follows. Catalyzes the condensation of pantoate with beta-alanine in an ATP-dependent reaction via a pantoyl-adenylate intermediate. This is Pantothenate synthetase from Albidiferax ferrireducens (strain ATCC BAA-621 / DSM 15236 / T118) (Rhodoferax ferrireducens).